Reading from the N-terminus, the 422-residue chain is RNA exonuclease 4 (422 aa).

The tract at residues 1-194 (MGKAKVPASK…APAPPTEEDI (194 aa)) is disordered. S15 carries the phosphoserine modification. Residues 26–40 (LTRKKNKKKKRFWKS) are compositionally biased toward basic residues. Phosphoserine is present on residues S96 and S111. Composition is skewed to basic and acidic residues over residues 106–127 (NKKE…DQEA) and 151–176 (GTEH…DIEH). A Glycyl lysine isopeptide (Lys-Gly) (interchain with G-Cter in SUMO2) cross-link involves residue K115. An Exonuclease domain is found at 243 to 394 (ALALDCEMVG…QDAQAAMRLY (152 aa)).

This sequence belongs to the REXO4 family. As to quaternary structure, can bind ESR1 and ESR2. This interaction is abrogated by estrogen and augmented by tamoxifen treatment.

Its subcellular location is the nucleus. The protein resides in the nucleolus. The polypeptide is RNA exonuclease 4 (REXO4) (Homo sapiens (Human)).